The following is a 146-amino-acid chain: Transcriptional regulator AdcR (146 aa).

An HTH marR-type domain is found at 1 to 143; sequence MRQLAKDINA…IQRFLTALVG (143 aa). 4 residues coordinate Zn(2+): Glu24, Cys30, Glu41, and His42. Positions 54–77 form a DNA-binding region, H-T-H motif; that stretch reads NSELARRLNVSQAAVTKAIKSLVK. Glu107, His108, and His112 together coordinate Zn(2+).

Homodimer.

Its activity is regulated as follows. Zinc acts as a coregulator and is required for DNA-binding activity. Functionally, zinc-responsive regulator that acts both as a repressor and as an activator by regulating directly the promoters of its target genes. In the presence of zinc, directly represses the expression of the adcRCBA operon, of genes coding for a group of surface antigen zinc-binding pneumococcal histidine triad proteins (PhtA, PhtB, PhtD and PhtE), and of adcAII. Can also activate expression of adh. In Streptococcus pneumoniae serotype 2 (strain D39 / NCTC 7466), this protein is Transcriptional regulator AdcR (adcR).